A 416-amino-acid polypeptide reads, in one-letter code: Probable tRNA pseudouridine synthase D (416 aa).

Catalysis depends on Asp-83, which acts as the Nucleophile. The TRUD domain occupies 158-379 (GFPNYFGYQR…PGGRRELLIR (222 aa)).

It belongs to the pseudouridine synthase TruD family.

It carries out the reaction uridine(13) in tRNA = pseudouridine(13) in tRNA. Could be responsible for synthesis of pseudouridine from uracil-13 in transfer RNAs. This Thermococcus onnurineus (strain NA1) protein is Probable tRNA pseudouridine synthase D.